A 257-amino-acid chain; its full sequence is Putative cysteine-rich repeat secretory protein 28 (257 aa).

A signal peptide spans 1–26 (MFSTFGSVPILTVVAIQLFLIRNVLS). 2 Gnk2-homologous domains span residues 32 to 136 (AYLH…TVDS) and 142 to 254 (YEND…LYPF).

It belongs to the cysteine-rich repeat secretory protein family.

The protein localises to the secreted. The protein is Putative cysteine-rich repeat secretory protein 28 (CRRSP28) of Arabidopsis thaliana (Mouse-ear cress).